The sequence spans 605 residues: Zinc metalloproteinase nas-34 (605 aa).

An N-terminal signal peptide occupies residues 1-19; it reads MVSYWPVLIVLCLLPICHA. The propeptide occupies 20–124; it reads KSYFADFVNG…EFLYAIRGKR (105 aa). A Peptidase M12A domain is found at 124 to 322; that stretch reads RSMTSFLSER…VKRINFAYCN (199 aa). Cystine bridges form between Cys-165/Cys-321 and Cys-191/Cys-211. His-219 provides a ligand contact to Zn(2+). Glu-220 is an active-site residue. The Zn(2+) site is built by His-223 and His-229. An EGF-like domain is found at 317–357; that stretch reads NFAYCNSTCSNYLDCQNGGYINPNDCNNCKCPPGFGGQLCD. The N-linked (GlcNAc...) asparagine glycan is linked to Asn-322. Cystine bridges form between Cys-325/Cys-345, Cys-347/Cys-356, Cys-366/Cys-388, and Cys-415/Cys-436. One can recognise a CUB domain in the interval 366–469; the sequence is CGAGDITATS…ARFSLNYRYD (104 aa). Residues 479–526 form a disordered region; sequence TTTSTTTTTAPITVPTVSPTTTTTRQTTTTARTSTTTTTTQAPPTTTT. Residues 525–566 enclose the TSP type-1 domain; sequence TTSTSQCASWSACSAQCGGCGTQSRRCGTYVETVYCNTNPCT. Intrachain disulfides connect Cys-531–Cys-551, Cys-537–Cys-560, and Cys-541–Cys-565.

Requires Zn(2+) as cofactor. In terms of tissue distribution, expressed in hypodermal cells. First expressed in the dorsal and lateral surface area of the middle and posterior region of embryos. At later stages, it localizes to lateral surface regions, probably corresponding to hypodermal seam cells. In L1 larvae, it is expressed in seam cells and in a few cells anterior to the nerve ring.

The protein localises to the secreted. In terms of biological role, metalloprotease. Required for normal hatching and migration of neuroblasts. May act by degrading eggshell proteins at hatching. This chain is Zinc metalloproteinase nas-34 (hch-1), found in Caenorhabditis elegans.